The primary structure comprises 634 residues: Factor of DNA methylation 1 (634 aa).

Residues 288-469 (LDEKKNLHQA…LESMNSVLMT (182 aa)) adopt a coiled-coil conformation. The span at 349 to 364 (ELDRQKLDEDKRKSDA) shows a compositional bias: basic and acidic residues. The interval 349–375 (ELDRQKLDEDKRKSDAMNKSLQLASRE) is disordered.

In terms of assembly, homodimer. Interacts with IDN2 and AGO4. Forms a complex with IDN2 and FMD2/INDL2. Highly expressed in flowers and at lower levels in roots, leaves and stems.

Functionally, forms a complex with IDN2 and FDM2/IDNL2 that is required for RNA-directed DNA methylation (RdDM) and that functions at a downstream step of the RdDM pathway. Required for de novo DNA methylation and 24 nucleotide small interfering RNA (siRNA) accumulation. Binds unmethylated but not methylated DNAs through its coiled-coil domain. May bind double-stranded RNAs (dsRNAs) with 5'-overhangs through its XS domain. However, according to, FMD1 does not bind dsRNAs. The protein is Factor of DNA methylation 1 of Arabidopsis thaliana (Mouse-ear cress).